We begin with the raw amino-acid sequence, 316 residues long: Very-long-chain 3-oxooacyl-coA reductase let-767 (316 aa).

NADP(+) is bound by residues 47-76 (ASWA…NVLL) and D106. S189 is a substrate binding site. The active-site Proton acceptor is the Y202. Residue K206 participates in NADP(+) binding.

This sequence belongs to the short-chain dehydrogenases/reductases (SDR) family. 17-beta-HSD 3 subfamily. Expressed in the gut of larva and adult.

It carries out the reaction a very-long-chain (3R)-3-hydroxyacyl-CoA + NADP(+) = a very-long-chain 3-oxoacyl-CoA + NADPH + H(+). The enzyme catalyses (omega-1)-methyl-(3R)-hydroxy-fatty acyl-CoA + NADP(+) = (omega-1)-methyl-3-oxo-fatty acyl-CoA + NADPH + H(+). It catalyses the reaction a 17beta-hydroxy steroid + NADP(+) = a 17-oxo steroid + NADPH + H(+). It functions in the pathway lipid metabolism; fatty acid biosynthesis. Required for branched-chain fatty acid synthesis (such as (omega-1)-methyl-fatty acids). Catalyzes the reduction of the 3-keto-fatty acyl-CoA intermediate that is formed in each cycle of fatty acid elongation. Very long-chain fatty acids (VLCFAs) serve as precursors for ceramide and sphingolipids. Involved in hormone production as it metabolizes 4-androstendione (androst-4-ene-3,17-dione) into testosterone and estrone into estradiol (17beta-estradiol) in vitro, but the physiological steroid substrate is unknown. This chain is Very-long-chain 3-oxooacyl-coA reductase let-767 (let-767), found in Caenorhabditis elegans.